We begin with the raw amino-acid sequence, 328 residues long: 4-hydroxy-3-methylbut-2-enyl diphosphate reductase (328 aa).

Cys24 serves as a coordination point for [4Fe-4S] cluster. (2E)-4-hydroxy-3-methylbut-2-enyl diphosphate-binding residues include His55 and His88. Residues His55 and His88 each contribute to the dimethylallyl diphosphate site. Isopentenyl diphosphate-binding residues include His55 and His88. Cys110 serves as a coordination point for [4Fe-4S] cluster. His138 contributes to the (2E)-4-hydroxy-3-methylbut-2-enyl diphosphate binding site. His138 contacts dimethylallyl diphosphate. His138 is a binding site for isopentenyl diphosphate. The Proton donor role is filled by Glu140. (2E)-4-hydroxy-3-methylbut-2-enyl diphosphate is bound at residue Thr178. Cys208 lines the [4Fe-4S] cluster pocket. Residues Ser236, Ser237, Asn238, and Ser279 each contribute to the (2E)-4-hydroxy-3-methylbut-2-enyl diphosphate site. Residues Ser236, Ser237, Asn238, and Ser279 each contribute to the dimethylallyl diphosphate site. Isopentenyl diphosphate-binding residues include Ser236, Ser237, Asn238, and Ser279.

This sequence belongs to the IspH family. It depends on [4Fe-4S] cluster as a cofactor.

It catalyses the reaction isopentenyl diphosphate + 2 oxidized [2Fe-2S]-[ferredoxin] + H2O = (2E)-4-hydroxy-3-methylbut-2-enyl diphosphate + 2 reduced [2Fe-2S]-[ferredoxin] + 2 H(+). It carries out the reaction dimethylallyl diphosphate + 2 oxidized [2Fe-2S]-[ferredoxin] + H2O = (2E)-4-hydroxy-3-methylbut-2-enyl diphosphate + 2 reduced [2Fe-2S]-[ferredoxin] + 2 H(+). The protein operates within isoprenoid biosynthesis; dimethylallyl diphosphate biosynthesis; dimethylallyl diphosphate from (2E)-4-hydroxy-3-methylbutenyl diphosphate: step 1/1. It functions in the pathway isoprenoid biosynthesis; isopentenyl diphosphate biosynthesis via DXP pathway; isopentenyl diphosphate from 1-deoxy-D-xylulose 5-phosphate: step 6/6. Functionally, catalyzes the conversion of 1-hydroxy-2-methyl-2-(E)-butenyl 4-diphosphate (HMBPP) into a mixture of isopentenyl diphosphate (IPP) and dimethylallyl diphosphate (DMAPP). Acts in the terminal step of the DOXP/MEP pathway for isoprenoid precursor biosynthesis. This is 4-hydroxy-3-methylbut-2-enyl diphosphate reductase from Ehrlichia ruminantium (strain Gardel).